The primary structure comprises 64 residues: NSVHPCCDPVKCEPREGEHCISGPCCRNCKFLNAGTICKRAMLDGLHDYCTGVTSDCPRNRYNH.

One can recognise a Disintegrin domain in the interval 1–64 (NSVHPCCDPV…SDCPRNRYNH (64 aa)). 4 disulfide bridges follow: Cys6–Cys29, Cys20–Cys26, Cys25–Cys50, and Cys38–Cys57. The Cell attachment site; atypical (MLD) signature appears at 42-44 (MLD).

It belongs to the disintegrin family. Dimeric disintegrin subfamily. Heterodimer; disulfide-linked. In terms of tissue distribution, expressed by the venom gland.

The protein resides in the secreted. Functionally, inhibits adhesion of cells expressing alpha-4/beta-1 (ITGA4/ITGB1) and alpha-4/beta-7 (ITGA4/ITGB7) integrins to the natural ligands vascular cell adhesion molecule 1 (VCAM-1) and mucosal addressin cell adhesion molecule 1 (MADCAM-1). The sequence is that of Disintegrin from Echis carinatus (Saw-scaled viper).